The sequence spans 476 residues: Adenosylhomocysteinase (476 aa).

Residues threonine 61, aspartate 140, and glutamate 200 each contribute to the substrate site. 201 to 203 (TTT) contacts NAD(+). Substrate contacts are provided by lysine 230 and aspartate 234. Residues asparagine 235, 264–269 (GYGDVG), glutamate 287, asparagine 322, 343–345 (IGH), and asparagine 389 each bind NAD(+).

It belongs to the adenosylhomocysteinase family. NAD(+) is required as a cofactor.

The protein localises to the cytoplasm. The catalysed reaction is S-adenosyl-L-homocysteine + H2O = L-homocysteine + adenosine. It functions in the pathway amino-acid biosynthesis; L-homocysteine biosynthesis; L-homocysteine from S-adenosyl-L-homocysteine: step 1/1. Functionally, may play a key role in the regulation of the intracellular concentration of adenosylhomocysteine. This chain is Adenosylhomocysteinase, found in Acidovorax sp. (strain JS42).